Here is a 634-residue protein sequence, read N- to C-terminus: Alpha-L-iduronidase (634 aa).

The N-terminal stretch at 1-16 is a signal peptide; that stretch reads MLTFFAAFLAAPLALA. Residues Pro44, Leu46, and His48 each coordinate alpha-D-mannopyranose. His81 lines the alpha-L-iduronate pocket. Asn100 carries N-linked (GlcNAc...) asparagine glycosylation. Residues Asn171 and Glu172 each coordinate alpha-L-iduronate. Glu172 (proton donor) is an active-site residue. N-linked (GlcNAc...) asparagine glycans are attached at residues Asn180 and Asn233. Lys254, Glu289, and Gly295 together coordinate alpha-L-iduronate. The active-site Nucleophile is the Glu289. Trp296 contacts alpha-D-mannopyranose. N-linked (GlcNAc...) asparagine glycosylation is present at Asn326. 2 residues coordinate alpha-L-iduronate: Asp339 and Arg353. Residues Asn362, Asn405, and Asn441 are each glycosylated (N-linked (GlcNAc...) asparagine). Cys531 and Cys567 are oxidised to a cystine.

The protein belongs to the glycosyl hydrolase 39 family. As to quaternary structure, monomer. Post-translationally, N-glycosylation contributes to substrate binding and is required for full enzymatic activity. In terms of tissue distribution, ubiquitous.

The protein localises to the lysosome. The catalysed reaction is Hydrolysis of unsulfated alpha-L-iduronosidic linkages in dermatan sulfate.. The sequence is that of Alpha-L-iduronidase (Idua) from Mus musculus (Mouse).